Here is a 169-residue protein sequence, read N- to C-terminus: Phosphopantetheine adenylyltransferase (169 aa).

S10 contributes to the substrate binding site. ATP-binding positions include 10-11 (SF) and H18. Positions 42, 74, and 88 each coordinate substrate. Residues 89-91 (GLR), E99, and 124-130 (YAFLSSS) contribute to the ATP site.

This sequence belongs to the bacterial CoaD family. Homohexamer. Mg(2+) is required as a cofactor.

The protein resides in the cytoplasm. The catalysed reaction is (R)-4'-phosphopantetheine + ATP + H(+) = 3'-dephospho-CoA + diphosphate. Its pathway is cofactor biosynthesis; coenzyme A biosynthesis; CoA from (R)-pantothenate: step 4/5. Functionally, reversibly transfers an adenylyl group from ATP to 4'-phosphopantetheine, yielding dephospho-CoA (dPCoA) and pyrophosphate. The polypeptide is Phosphopantetheine adenylyltransferase (Geobacillus sp. (strain WCH70)).